Reading from the N-terminus, the 190-residue chain is Pyridoxal 5'-phosphate synthase subunit PdxT (190 aa).

46–48 serves as a coordination point for L-glutamine; that stretch reads GES. The Nucleophile role is filled by C78. L-glutamine-binding positions include R105 and 134–135; that span reads IR. Active-site charge relay system residues include H170 and E172.

Belongs to the glutaminase PdxT/SNO family. In terms of assembly, in the presence of PdxS, forms a dodecamer of heterodimers. Only shows activity in the heterodimer.

The enzyme catalyses aldehydo-D-ribose 5-phosphate + D-glyceraldehyde 3-phosphate + L-glutamine = pyridoxal 5'-phosphate + L-glutamate + phosphate + 3 H2O + H(+). It carries out the reaction L-glutamine + H2O = L-glutamate + NH4(+). The protein operates within cofactor biosynthesis; pyridoxal 5'-phosphate biosynthesis. Catalyzes the hydrolysis of glutamine to glutamate and ammonia as part of the biosynthesis of pyridoxal 5'-phosphate. The resulting ammonia molecule is channeled to the active site of PdxS. This Clostridium beijerinckii (strain ATCC 51743 / NCIMB 8052) (Clostridium acetobutylicum) protein is Pyridoxal 5'-phosphate synthase subunit PdxT.